We begin with the raw amino-acid sequence, 518 residues long: Major facilitator superfamily domain-containing protein 8 (518 aa).

The segment at 1 to 20 (MAGLRNESEQEPLLGDTPGS) is disordered. Residues 1-40 (MAGLRNESEQEPLLGDTPGSREWDILETEEHYKSRWRSIR) lie on the Cytoplasmic side of the membrane. The Dileucine internalization motif motif lies at 13 to 14 (LL). The chain crosses the membrane as a helical span at residues 41–61 (ILYLTMFLSSVGFSVVMMSIW). The Extracellular segment spans residues 62–74 (PYLQKIDPTADTS). A helical membrane pass occupies residues 75–95 (FLGWVIASYSLGQMVASPIFG). At 96 to 105 (LWSNYRPRKE) the chain is on the cytoplasmic side. A helical membrane pass occupies residues 106–126 (PLIVSILISVAANCLYAYLHI). The Extracellular portion of the chain corresponds to 127 to 131 (PASHN). A helical transmembrane segment spans residues 132 to 152 (KYYMLVARGLLGIGAGNVAVV). Residues 153-173 (RSYTAGATSLQERTSSMANIS) lie on the Cytoplasmic side of the membrane. Residues 174–194 (MCQALGFILGPVFQTCFTFLG) form a helical membrane-spanning segment. Residues 195–211 (EKGVTWDVIKLQINMYT) lie on the Extracellular side of the membrane. The chain crosses the membrane as a helical span at residues 212–232 (TPVLLSAFLGILNIILILAIL). The Cytoplasmic segment spans residues 233 to 266 (REHRVDDSGRQCKSINFEEASTDEAQVPQGNIDQ). Residues 267–287 (VAVVAINVLFFVTLFIFALFE) traverse the membrane as a helical segment. Residues 288–304 (TIITPLTMDMYAWTQEQ) lie on the Extracellular side of the membrane. The helical transmembrane segment at 305 to 325 (AVLYNGIILAALGVEAVVIFL) threads the bilayer. The Cytoplasmic portion of the chain corresponds to 326 to 337 (GVKLLSKKIGER). The chain crosses the membrane as a helical span at residues 338 to 358 (AILLGGLIVVWVGFFILLPWG). Topologically, residues 359–412 (NQFPKIQWEDLHNNSIPNTTFGEIIIGLWKSPMEDDNERPTGCSIEQAWCLYTP) are extracellular. N-linked (GlcNAc...) asparagine glycosylation is found at Asn-371 and Asn-376. The helical transmembrane segment at 413–433 (VIHLAQFLTSAVLIGLGYPVC) threads the bilayer. Residues 434–451 (NLMSYTLYSKILGPKPQG) are Cytoplasmic-facing. Residues 452–472 (VYMGWLTASGSGARILGPMFI) form a helical membrane-spanning segment. The Extracellular segment spans residues 473 to 482 (SQVYAHWGPR). The chain crosses the membrane as a helical span at residues 483-503 (WAFSLVCGIIVLTITLLGVVY). Residues 504 to 518 (KRLIALSVRYGRIQE) are Cytoplasmic-facing.

This sequence belongs to the major facilitator superfamily. Expressed at very low levels in all tissues tested.

Its subcellular location is the endosome membrane. The protein resides in the lysosome membrane. It carries out the reaction chloride(in) = chloride(out). It catalyses the reaction iodide(out) = iodide(in). The enzyme catalyses fluoride(in) = fluoride(out). With respect to regulation, inhibited by chloride channel blockers 4,4'-diisothiocyano-2,2'-stilbenedisulfonate (DIDS), niflumic acid (NFA), and 5-Nitro-2-(3-phenylpropylamino) benzoic acid (NPPB). In terms of biological role, outward-rectifying chloride channel involved in endolysosomal chloride homeostasis, membrane fusion and function. Conducts chloride currents up to hundreds of picoamperes. Regulates lysosomal calcium content by reducing the lysosomal membrane potential, thereby activating TRPML1 channel and further release of lysosomal calcium ions. Regulates the pH in endolysosomal compartments and may contribute to progressive acidification from endosome to lysosome. Permeable to other halides such as iodide and fluoride ions. This chain is Major facilitator superfamily domain-containing protein 8, found in Homo sapiens (Human).